The sequence spans 55 residues: Protein CADMIUM TOLERANCE 1 (55 aa).

A helical membrane pass occupies residues 24 to 40 (GCLYACIFTALCCFCCY).

This sequence belongs to the CYSTM1 family.

The protein localises to the cell membrane. The protein resides in the secreted. Its subcellular location is the cell wall. Confers resistance to heavy metal ions (e.g. cadmium (CdCl(2)) and copper (CuCl(2))) by chelating them at the plasma membrane of root cells, thus stopping their entry and reducing their accumulation. This is Protein CADMIUM TOLERANCE 1 from Echinochloa crus-galli subsp. caudata (Cockspur).